Reading from the N-terminus, the 285-residue chain is ATP synthase gamma chain (285 aa).

Belongs to the ATPase gamma chain family. F-type ATPases have 2 components, CF(1) - the catalytic core - and CF(0) - the membrane proton channel. CF(1) has five subunits: alpha(3), beta(3), gamma(1), delta(1), epsilon(1). CF(0) has three main subunits: a, b and c.

The protein resides in the cell membrane. Its function is as follows. Produces ATP from ADP in the presence of a proton gradient across the membrane. The gamma chain is believed to be important in regulating ATPase activity and the flow of protons through the CF(0) complex. This is ATP synthase gamma chain from Halalkalibacterium halodurans (strain ATCC BAA-125 / DSM 18197 / FERM 7344 / JCM 9153 / C-125) (Bacillus halodurans).